The following is a 1287-amino-acid chain: DENN domain-containing protein 5A (1287 aa).

The uDENN domain occupies 57–259 (STTEGENFEQ…EVPLPPPGRS (203 aa)). Ser-193 is modified (phosphoserine). The cDENN domain occupies 278–414 (ELPLFDFPVK…LEFVQEVSEI (137 aa)). One can recognise a dDENN domain in the interval 416-598 (MAFGVPPEGN…IMCHDDDDKD (183 aa)). In terms of domain architecture, RUN 1 spans 787–950 (VEENTLIASL…DYFCFTNVFT (164 aa)). The PLAT domain occupies 954–1062 (IPYHILIVPS…DDGSLERVLV (109 aa)). Thr-1079 is subject to Phosphothreonine. A phosphoserine mark is found at Ser-1085, Ser-1087, and Ser-1096. In terms of domain architecture, RUN 2 spans 1134–1280 (TLLLCGECGL…QEFNITLDTS (147 aa)).

Belongs to the RAB6IP1 family. In terms of assembly, interacts with RAB6A bound to GTP. In terms of tissue distribution, expressed in developing brain and developing neurons.

It is found in the golgi apparatus membrane. Guanine nucleotide exchange factor (GEF) which may activate RAB6A and RAB39A and/or RAB39B. Promotes the exchange of GDP to GTP, converting inactive GDP-bound Rab proteins into their active GTP-bound form. Involved in the negative regulation of neurite outgrowth. The protein is DENN domain-containing protein 5A (Dennd5a) of Rattus norvegicus (Rat).